The chain runs to 122 residues: MIKPLSYLNVADNSGARELMCIRALGGSYRESANIGDVIIAVVKDALPNMPVKRSDIVRAVIVRTRKGIRRENGMAIRFDDNAAVIINKEGNPRGTRVFGPIARELRDKNFTKIVSLAPEVL.

It belongs to the universal ribosomal protein uL14 family. In terms of assembly, part of the 50S ribosomal subunit.

The protein localises to the plastid. It localises to the chloroplast. Functionally, binds to 23S rRNA. The sequence is that of Large ribosomal subunit protein uL14c from Chlamydomonas reinhardtii (Chlamydomonas smithii).